The primary structure comprises 226 residues: N-acetyltransferase family 8 member 2 (226 aa).

2 helical membrane-spanning segments follow: residues 33 to 55 and 60 to 82; these read FYHV…TIIL and WLLA…WVSC. In terms of domain architecture, N-acetyltransferase spans 69 to 221; that stretch reads LFLLCLRLIF…FHFTYSLPSV (153 aa). Position 204 is an N6-acetyllysine (Lys-204).

It belongs to the camello family.

The protein localises to the membrane. Its function is as follows. Probable acetyltransferase. Has no detectable histone acetyltransferase activity towards histone H3 or H4. This is N-acetyltransferase family 8 member 2 from Rattus norvegicus (Rat).